The sequence spans 621 residues: Chaperone protein HscA homolog (621 aa).

The protein belongs to the heat shock protein 70 family.

Its function is as follows. Chaperone involved in the maturation of iron-sulfur cluster-containing proteins. Has a low intrinsic ATPase activity which is markedly stimulated by HscB. The chain is Chaperone protein HscA homolog from Acidithiobacillus ferrooxidans (strain ATCC 23270 / DSM 14882 / CIP 104768 / NCIMB 8455) (Ferrobacillus ferrooxidans (strain ATCC 23270)).